The chain runs to 547 residues: Germacrene A synthase (547 aa).

4 residues coordinate Mg(2+): Asp-300, Asp-304, Asp-443, and Glu-451. The short motif at 300–304 (DDTYD) is the DDXXD motif element.

Belongs to the terpene synthase family. Tpsa subfamily. Requires Mg(2+) as cofactor. Mn(2+) serves as cofactor. In terms of tissue distribution, expressed in leaves.

The protein localises to the plastid. It is found in the chloroplast. It catalyses the reaction (2E,6E)-farnesyl diphosphate = germacrene A + diphosphate. The enzyme catalyses (2E,6E)-farnesyl diphosphate = (1S,2S,4R)-beta-elemene + diphosphate. The protein operates within secondary metabolite biosynthesis; terpenoid biosynthesis. Its function is as follows. Sesquiterpene synthase involved in the biosynthesis of volatile compounds widely used in aromatherapy and folk medicine, and present in culinary herbs. Mediates the conversion of (2E,6E)-farnesyl diphosphate (FPP) into germacrene A and beta-elemene. Not able to use (2E)-geranyl diphosphate (GPP) as substrate. This Lavandula pedunculata subsp. lusitanica (French lavender) protein is Germacrene A synthase.